A 1094-amino-acid chain; its full sequence is Potassium-transporting ATPase alpha chain 2 (1094 aa).

Over residues 1 to 21 the composition is skewed to basic and acidic residues; that stretch reads MAGGAHRADRATGEERKEGGG. A disordered region spans residues 1 to 37; the sequence is MAGGAHRADRATGEERKEGGGRWRAPHSPSPPGPRGC. Residues 28–37 show a composition bias toward pro residues; the sequence is SPSPPGPRGC. At 56-157 the chain is on the cytoplasmic side; it reads RYCTLLLFQR…NALTPPKQTP (102 aa). A helical transmembrane segment spans residues 158–178; it reads EIIKFLKQMVGGFSILLWVGA. At 179-201 the chain is on the lumenal side; the sequence is VLCWIAFGIQYVSNPSASLDRVY. The helical transmembrane segment at 202-222 threads the bilayer; sequence LGTVLAVVVILTGIFAYYQEA. Residues 223–358 are Cytoplasmic-facing; it reads KSTNIMASFC…NEKTPIAIEI (136 aa). The segment at 286–305 is disordered; it reads SSLTGESEPQSRSSGFTHEN. The helical transmembrane segment at 359–378 threads the bilayer; it reads EHFVHIVAGVAVSVGILFFI. Residues 379 to 390 are Lumenal-facing; that stretch reads IAVCMKYHVLDA. A helical membrane pass occupies residues 391–408; sequence IIFLIAIIVANVPEGLLA. Topologically, residues 409 to 842 are cytoplasmic; it reads TVTVALSLTA…EEGRLIFDNL (434 aa). The active-site 4-aspartylphosphate intermediate is aspartate 446. The Mg(2+) site is built by aspartate 787 and aspartate 791. The helical transmembrane segment at 843 to 862 threads the bilayer; that stretch reads KKTIAYTLTKNIAELCPFLI. Topologically, residues 863–872 are lumenal; it reads YIILGLPLPI. A helical transmembrane segment spans residues 873–893; that stretch reads GTITLLFIDLGTDIIPSIALA. Topologically, residues 894 to 913 are cytoplasmic; the sequence is YEKAESDIMNRKPRHKKKDR. Residues 914–936 form a helical membrane-spanning segment; it reads LVNQQLAVYSYLHIGLMQALGAF. At 937–988 the chain is on the lumenal side; the sequence is LVYFTVYAQQGFRPTSLFHLRIAWDSDHLNDLEDNYGQEWTSYQRQYLEWTG. Residues 989-1008 form a helical membrane-spanning segment; the sequence is YTAFFVGIMVQQIADLIIRK. Residues 1009 to 1022 lie on the Cytoplasmic side of the membrane; it reads TRKNSIFKQGLFRN. Serine 1013 is modified (phosphoserine; by PKA). A helical membrane pass occupies residues 1023 to 1041; the sequence is KVIWVGIASQIIVALLLSY. Residues 1042–1056 lie on the Lumenal side of the membrane; that stretch reads GLGSITALNFTMLKA. A helical transmembrane segment spans residues 1057-1077; the sequence is QYWFVAVPHAILIWVYDEMRK. At 1078–1094 the chain is on the cytoplasmic side; it reads LFIRLYPGSWWDKNMYY.

Belongs to the cation transport ATPase (P-type) (TC 3.A.3) family. Type IIC subfamily. The X(+)/K(+) ATPase pump is composed of a catalytic alpha subunit and an auxiliary non-catalytic beta subunit. The alpha subunit pairs with the beta subunit of gastric H(+)/K(+) ATPase ATP4B or the beta subunit of Na(+)/K(+) ATPases ATP1B1 and ATP1B3; this interaction is required for the formation of a functionally active pump and its targeting at the plasma membrane. As to expression, found in the skin, kidney, distal colon and brain. In the kidney it is found in the connecting tubule, cortical collecting duct and outer medullary collecting duct while in the brain it is specific to choroid plexus and cortex.

It is found in the apical cell membrane. The catalysed reaction is K(+)(out) + ATP + H2O + H(+)(in) = K(+)(in) + ADP + phosphate + 2 H(+)(out). It carries out the reaction K(+)(out) + Na(+)(in) + ATP + H2O = K(+)(in) + Na(+)(out) + ADP + phosphate + H(+). Its function is as follows. The catalytic subunit of a H(+)/K(+) ATPase and/or Na(+)/K(+) ATPase pump which transports K(+) ions in exchange for Na(+) and/or H(+) ions across the apical membrane of epithelial cells. Uses ATP as an energy source to pump K(+) ions into the cell while transporting Na(+) and/or H(+) ions to the extracellular compartment. Involved in the maintenance of electrolyte homeostasis through K(+) ion absorption in kidney and colon. In the airway epithelium, may play a primary role in mucus acidification regulating its viscosity and clearance. The sequence is that of Potassium-transporting ATPase alpha chain 2 (ATP12A) from Oryctolagus cuniculus (Rabbit).